We begin with the raw amino-acid sequence, 206 residues long: Small ribosomal subunit protein uS4 (206 aa).

One can recognise an S4 RNA-binding domain in the interval 96–158 (GRLDNVVYRM…AKQQSRIKAA (63 aa)).

Belongs to the universal ribosomal protein uS4 family. As to quaternary structure, part of the 30S ribosomal subunit. Contacts protein S5. The interaction surface between S4 and S5 is involved in control of translational fidelity.

Its function is as follows. One of the primary rRNA binding proteins, it binds directly to 16S rRNA where it nucleates assembly of the body of the 30S subunit. In terms of biological role, with S5 and S12 plays an important role in translational accuracy. This chain is Small ribosomal subunit protein uS4, found in Aliivibrio fischeri (strain ATCC 700601 / ES114) (Vibrio fischeri).